Consider the following 501-residue polypeptide: NAD(P)H-quinone oxidoreductase chain 4, chloroplastic (501 aa).

14 helical membrane passes run 5–25, 38–58, 85–105, 112–130, 135–155, 168–188, 209–229, 243–263, 275–295, 306–326, 331–351, 387–407, 417–437, and 463–483; these read FPWL…IFFL, ICIC…HFQL, GLSI…TLAA, SRLF…IGSF, LLLF…LLAM, FILY…GIGL, ALEI…LPII, HYST…YGLV, SIFS…AALT, IAYS…SITD, GAIL…FLAG, LALP…GIIT, ILIT…LLSM, and LFVS…PDFV.

This sequence belongs to the complex I subunit 4 family.

The protein resides in the plastid. It is found in the chloroplast thylakoid membrane. The catalysed reaction is a plastoquinone + NADH + (n+1) H(+)(in) = a plastoquinol + NAD(+) + n H(+)(out). It catalyses the reaction a plastoquinone + NADPH + (n+1) H(+)(in) = a plastoquinol + NADP(+) + n H(+)(out). The protein is NAD(P)H-quinone oxidoreductase chain 4, chloroplastic of Eucalyptus globulus subsp. globulus (Tasmanian blue gum).